Reading from the N-terminus, the 169-residue chain is uncharacterized protein (169 aa).

Residues 97–117 (IVIFCILVIVAFVIWLVVWLF) form a helical membrane-spanning segment. The interval 137–169 (NYSGLPTPQPTPTHYPAEQYSYDPARDRDNYRY) is disordered. Basic and acidic residues predominate over residues 160 to 169 (PARDRDNYRY).

Its subcellular location is the membrane. This is an uncharacterized protein from Caenorhabditis elegans.